Consider the following 308-residue polypeptide: Ribosomal RNA large subunit methyltransferase F (308 aa).

It belongs to the methyltransferase superfamily. METTL16/RlmF family.

The protein localises to the cytoplasm. The catalysed reaction is adenosine(1618) in 23S rRNA + S-adenosyl-L-methionine = N(6)-methyladenosine(1618) in 23S rRNA + S-adenosyl-L-homocysteine + H(+). In terms of biological role, specifically methylates the adenine in position 1618 of 23S rRNA. The polypeptide is Ribosomal RNA large subunit methyltransferase F (Escherichia coli O127:H6 (strain E2348/69 / EPEC)).